The sequence spans 270 residues: 4-hydroxy-tetrahydrodipicolinate reductase (270 aa).

NAD(+) contacts are provided by residues 9 to 14 (GAGGRM) and Glu-35. Arg-36 lines the NADP(+) pocket. Residues 99–101 (GTT) and 123–126 (ASNF) each bind NAD(+). His-156 (proton donor/acceptor) is an active-site residue. His-157 is a (S)-2,3,4,5-tetrahydrodipicolinate binding site. Catalysis depends on Lys-160, which acts as the Proton donor. Residue 166–167 (GT) participates in (S)-2,3,4,5-tetrahydrodipicolinate binding.

The protein belongs to the DapB family.

The protein resides in the cytoplasm. The catalysed reaction is (S)-2,3,4,5-tetrahydrodipicolinate + NAD(+) + H2O = (2S,4S)-4-hydroxy-2,3,4,5-tetrahydrodipicolinate + NADH + H(+). It carries out the reaction (S)-2,3,4,5-tetrahydrodipicolinate + NADP(+) + H2O = (2S,4S)-4-hydroxy-2,3,4,5-tetrahydrodipicolinate + NADPH + H(+). Its pathway is amino-acid biosynthesis; L-lysine biosynthesis via DAP pathway; (S)-tetrahydrodipicolinate from L-aspartate: step 4/4. Catalyzes the conversion of 4-hydroxy-tetrahydrodipicolinate (HTPA) to tetrahydrodipicolinate. The protein is 4-hydroxy-tetrahydrodipicolinate reductase of Haemophilus influenzae (strain PittEE).